The primary structure comprises 149 residues: Endoribonuclease YbeY (149 aa).

Residues His113, His117, and His123 each contribute to the Zn(2+) site.

Belongs to the endoribonuclease YbeY family. It depends on Zn(2+) as a cofactor.

It localises to the cytoplasm. Single strand-specific metallo-endoribonuclease involved in late-stage 70S ribosome quality control and in maturation of the 3' terminus of the 16S rRNA. This chain is Endoribonuclease YbeY, found in Saccharophagus degradans (strain 2-40 / ATCC 43961 / DSM 17024).